The primary structure comprises 840 residues: Transient receptor potential cation channel subfamily V member 1 (840 aa).

A compositionally biased stretch (low complexity) spans 1–12 (MKNWGSSDSGGS). Positions 1-43 (MKNWGSSDSGGSEDPPQEDSCLDPLDGDPNSRPVPAKPHIFPT) are disordered. Residues 1–433 (MKNWGSSDSG…QDKWDRFVKR (433 aa)) lie on the Cytoplasmic side of the membrane. 2 ANK repeats span residues 111–139 (KLYDRRKIFEAVAQNNCEELQSLLLFLQK) and 154–186 (TGKTCLLKAMLNLHDGQNDTIPLLLEIARQTDS). ATP is bound by residues Arg-116, Lys-156, Lys-161, Asn-165, 200–203 (YKGQ), and 211–212 (ER). ANK repeat units follow at residues 204-229 (TALHIAIERRNMALVTLLVENGADVQ), 250-277 (ELPLSLAACTNQLGIVKFLLQNSWQPAD), 286-322 (NTVLHALVEVADNTADNTKFVTSMYNEILILGAKLHP), and 336-359 (TPLALAARSGKIGVLAYILQREIQ). Thr-371 carries the phosphothreonine; by PKA; in vitro modification. One copy of the ANK 7 repeat lies at 394–416 (NSVLEVIAYSSSETPNRHDMLLV). A helical membrane pass occupies residues 434–455 (IFYFNFFIYCLYMIIFTTAAYY). The Extracellular segment spans residues 456 to 473 (RPVDGLPPYKLKHTVGDY). The helical transmembrane segment at 474-498 (FRVTGEILSVLGGVYFFFRGIQYFL) threads the bilayer. The Cytoplasmic segment spans residues 499 to 511 (QRRPSLKTLFVDS). Phosphoserine; by PKC/PRKCE is present on Ser-503. 512-513 (YS) lines the resiniferatoxin pocket. The chain crosses the membrane as a helical span at residues 512–533 (YSEMLFFVQSLFMLGTVVLYFC). Residues 534 to 536 (HHK) are Extracellular-facing. Residues 537–557 (EYVASMVFSLAMGWTNMLYYT) traverse the membrane as a helical segment. Resiniferatoxin contacts are provided by Thr-551 and Arg-558. The Cytoplasmic portion of the chain corresponds to 558–560 (RGF). A helical membrane pass occupies residues 561–599 (QQMGIYAVMIEKMILRDLCRFMFVYLVFLFGFSTAVVTL). The Extracellular segment spans residues 600-631 (IEDGKNNSVPTESTLHRWRGPGCRPPDSSYNS). Residue Asn-605 is glycosylated (N-linked (GlcNAc...) asparagine). Positions 632 to 653 (LYSTCLELFKFTIGMGDLEFTE) form an intramembrane region, pore-forming. A Na(+)-binding site is contributed by Gly-645. The Selectivity filter motif lies at 645–648 (GMGD). Asp-648 lines the Ca(2+) pocket. Over 654–657 (NYDF) the chain is Extracellular. A helical membrane pass occupies residues 658 to 684 (KAVFIILLLAYVILTYILLLNMLIALM). At 685–840 (GETVNKIAQE…FKDPVGLGEK (156 aa)) the chain is on the cytoplasmic side. The segment at 686 to 714 (ETVNKIAQESKNIWKLQRAITILDTEKSF) is AD. A Phosphothreonine modification is found at Thr-706. The interval 769 to 803 (EGIKRTLSFSLRSGRVSGRNWKNFSLVPLLRDAST) is interaction with calmodulin. Position 776 is a phosphoserine (Ser-776). Positions 779–794 (LRSGRVSGRNWKNFSL) are required for PIP2-mediated channel inhibition. At Ser-802 the chain carries Phosphoserine; by PKC/PRKCE and PKC/PRKCZ. Ser-822 bears the Phosphoserine mark.

This sequence belongs to the transient receptor (TC 1.A.4) family. TrpV subfamily. TRPV1 sub-subfamily. Homotetramer. Interacts with PIRT. May also form a heteromeric channel with TRPV3. Interacts with CALM, PRKCM and CSK. Interacts with PRKCG and NTRK1, probably by forming a trimeric complex. Interacts with the Scolopendra mutilans RhTx toxin. Interacts with TMEM100. Interacts with PACS2. Post-translationally, phosphorylation by PKA reverses capsaicin-induced dephosphorylation at multiple sites. Phosphorylation by CAMKII seems to regulate binding to vanilloids. Phosphorylated and modulated by PRKCE, PRKCM and probably PRKCZ. Dephosphorylation by calcineurin seems to lead to receptor desensitization and phosphorylation by CAMKII recovers activity.

The protein resides in the postsynaptic cell membrane. It localises to the cell projection. Its subcellular location is the dendritic spine membrane. The protein localises to the cell membrane. The enzyme catalyses Ca(2+)(in) = Ca(2+)(out). The catalysed reaction is Mg(2+)(in) = Mg(2+)(out). It catalyses the reaction Na(+)(in) = Na(+)(out). It carries out the reaction K(+)(in) = K(+)(out). With respect to regulation, channel activity is activated via the interaction with PIRT and phosphatidylinositol 4,5-bisphosphate (PIP2). Both PIRT and PIP2 are required to activate channel activity. The channel is sensitized by ATP binding. Repeated stimulation with capsaicin gives rise to progressively smaller responses, due to desensitization. This desensitization is triggered by the influx of calcium ions and is inhibited by elevated ATP levels. Ca(2+) and CALM displace ATP from its binding site and trigger a conformation change that leads to a closed, desensitized channel. Intracellular PIP2 inhibits desensitization. The double-knot toxin (DkTx) from the Chinese earth tiger tarantula activates the channel and traps it in an open conformation. The Scolopendra mutilans RhTx toxin potentiates the heat activation pathway mediated by this channel by binding to the charge-rich outer pore region (in an activated state). Non-selective calcium permeant cation channel involved in detection of noxious chemical and thermal stimuli. Seems to mediate proton influx and may be involved in intracellular acidosis in nociceptive neurons. Involved in mediation of inflammatory pain and hyperalgesia. Sensitized by a phosphatidylinositol second messenger system activated by receptor tyrosine kinases, which involves PKC isozymes and PCL. Activated by vanilloids, like capsaicin, and temperatures higher than 42 degrees Celsius. Upon activation, exhibits a time- and Ca(2+)-dependent outward rectification, followed by a long-lasting refractory state. Mild extracellular acidic pH (6.5) potentiates channel activation by noxious heat and vanilloids, whereas acidic conditions (pH &lt;6) directly activate the channel. Can be activated by endogenous compounds, including 12-hydroperoxytetraenoic acid and bradykinin. Acts as ionotropic endocannabinoid receptor with central neuromodulatory effects. Triggers a form of long-term depression (TRPV1-LTD) mediated by the endocannabinoid anandamine in the hippocampus and nucleus accumbens by affecting AMPA receptors endocytosis. This is Transient receptor potential cation channel subfamily V member 1 (TRPV1) from Canis lupus familiaris (Dog).